A 441-amino-acid polypeptide reads, in one-letter code: Polyketide methyltransferase ustM (441 aa).

The methyltransferase (CMeT) domain stretch occupies residues 266–368; sequence LEVGAGLGGT…VRKLLRGGGF (103 aa).

The protein belongs to the methyltransferase superfamily.

Its pathway is secondary metabolite biosynthesis. Its function is as follows. Polyketide methyltransferase; part of the gene cluster that mediates the biosynthesis of ustilaginoidins, dimeric gamma-naphthopyrones isolated from different fungal species. The first step in the biosynthesis of ustilaginoidins is the production of gamma-naphthopyrone precursor YWA1 by the non-reducing polyketide synthase ustP, via condensation of one acetyl-CoA starter unit with 6 malonyl-CoA units. YWA1 is then probably substrate of the ustZ to yield norrubrofusarin via a dehydration reaction. A key enzyme in the biosynthetic pathway is the laccase ustL, which catalyzes the oxidative dimerization of norrubrofusarin to ustilaginoidin A. It can produce the M- and P-atropisomers in varying amounts, depending on the reaction conditions. For the biosynthesis of 3-methylustilaginoid in derivatives such as chaetochromin A, a methylated derivative of YWA1 is required. The C-methylation is considered to be catalyzed by ustM, the phosphopantetheine attachment site of which indicates that it acts on the growing polyketide chain before release of the product. For the biosynthesis of chaetochromin A, it is assumed that saturation of the D2 double bond takes place before dimerization, and is probably catalyzed by an external reductase because no candidate gene was identified within the cluster. This Ustilaginoidea virens (Rice false smut fungus) protein is Polyketide methyltransferase ustM.